A 364-amino-acid polypeptide reads, in one-letter code: Thymidine kinase (364 aa).

Gly-36–Thr-43 provides a ligand contact to ATP. Catalysis depends on Glu-64, which acts as the Proton acceptor. Gln-108 contacts substrate. Residue Arg-201 participates in ATP binding. A substrate-binding site is contributed by Arg-207.

It belongs to the herpesviridae thymidine kinase family. As to quaternary structure, homodimer.

The enzyme catalyses thymidine + ATP = dTMP + ADP + H(+). Its function is as follows. Catalyzes the transfer of the gamma-phospho group of ATP to thymidine to generate dTMP in the salvage pathway of pyrimidine synthesis. The dTMP serves as a substrate for DNA polymerase during viral DNA replication. Allows the virus to be reactivated and to grow in non-proliferative cells lacking a high concentration of phosphorylated nucleic acid precursors. The polypeptide is Thymidine kinase (Infectious laryngotracheitis virus (strain Thorne V882) (ILTV)).